The following is a 538-amino-acid chain: MNLELLESFGQNYPEEADGTLDCISMALTCTFNRWGTLLAVGCNDGRIVIWDFLTRGIAKIISAHIHPVCSLCWSRDGHKLVSASTDNIVSQWDVLSGDCDQRFRFPSPILKVQYHPRDQNKVLVCPMKSAPVMLTLSDSKHVVLPVDDDSDLNVVASFDRRGEYIYTGNAKGKILVLKTDSQDLVASFRVTTGTSNTTAIKSIEFARKGSCFLINTADRIIRVYDGREILTCGRDGEPEPMQKLQDLVNRTPWKKCCFSGDGEYIVAGSARQHALYIWEKSIGNLVKILHGTRGELLLDVAWHPVRPIIASISSGVVSIWAQNQVENWSAFAPDFKELDENVEYEERESEFDIEDEDKSEPEQTGADAAEDEEVDVTSVDPIAAFCSSDEELEDSKALLYLPIAPEVEDPEENPYGPPPDAVQTSLMDEGASSEKKRQSSADGSQPPKKKPKTTNIELQGVPNDEVHPLLGVKGDGKSKKKQAGRPKGSKGKEKDSPFKPKLYKGDRGLPLEGSAKGKVQAELSQPLTAGGAISELL.

WD repeat units lie at residues 22 to 63 (DCIS…KIIS) and 64 to 103 (AHIH…CDQR). Lysine 129 participates in a covalent cross-link: Glycyl lysine isopeptide (Lys-Gly) (interchain with G-Cter in SUMO2). WD repeat units lie at residues 148–188 (DDDS…LVAS), 196–235 (SNTT…TCGR), 249–291 (VNRT…KILH), and 293–331 (TRGE…NWSA). At threonine 252 the chain carries Phosphothreonine; by CDK1. The interaction with ASH2L stretch occupies residues 330–366 (SAFAPDFKELDENVEYEERESEFDIEDEDKSEPEQTG). Over residues 344 to 360 (EYEERESEFDIEDEDKS) the composition is skewed to acidic residues. The disordered stretch occupies residues 344-377 (EYEERESEFDIEDEDKSEPEQTGADAAEDEEVDV). Phosphoserine is present on serine 350. Residues 371-380 (EDEEVDVTSV) are interaction with WDR5. 2 positions are modified to phosphoserine: serine 388 and serine 389. The disordered stretch occupies residues 408 to 538 (VEDPEENPYG…TAGGAISELL (131 aa)). A compositionally biased stretch (basic residues) spans 479-490 (SKKKQAGRPKGS). Positions 491–510 (KGKEKDSPFKPKLYKGDRGL) are enriched in basic and acidic residues. Serine 497 is modified (phosphoserine; by CDK1). The residue at position 525 (serine 525) is a Phosphoserine.

In terms of assembly, component of the SET1 complex, at least composed of the catalytic subunit (SETD1A or SETD1B), WDR5, WDR82, RBBP5, ASH2L/ASH2, CXXC1/CFP1, HCFC1 and DPY30. Core component of several methyltransferase-containing complexes including MLL1/MLL, MLL2/3 (also named ASCOM complex) and MLL4/WBP7. Each complex is at least composed of ASH2L, RBBP5, WDR5, DPY30, one or more specific histone methyltransferases (KMT2A/MLL1, KMT2D/MLL2, KMT2C/MLL3 and KMT2B/MLL4), and the facultative components PAGR1, BACC1, CHD8, E2F6, HCFC1, HCFC2, HSP70, INO80C, KDM6A, KANSL1, LAS1L, MAX, MCRS1, MEN1, MGA, MYST1/MOF, NCOA6, PAXIP1/PTIP, PELP1, PHF20, PRP31, RING2, RUVB1/TIP49A, RUVB2/TIP49B, SENP3, TAF1, TAF4, TAF6, TAF7, TAF9, TEX10 and alpha- and beta-tubulin. Component of a histone methylation complex composed of at least ZNF335, RBBP5, ASH2L and WDR5; the complex may have histone H3-specific methyltransferase activity, however does not have specificity for 'Lys-4' of histone H3. Interacts with ZNF335. Interacts with ASH2L; the interaction is direct. Interacts with WDR5; the interaction is direct. Components of the ZNF335-RBBP5-ASH2L-WDR5 histone methylation complex may associate with components of a nuclear receptor-mediated transcription complex to form a complex at least composed of ZNF335, HCFC1, CCAR2, EMSY, MKI67, RBBP5, ASH2L and WDR5. Within this complex interacts with EMSY. Found in a complex with RBBP5, ASH2L, DPY30, KMT2A, KMT2D and WDR5. Interacts with SETD1A. Interacts with WDR82. Ubiquitously expressed.

The protein localises to the nucleus. Functionally, in embryonic stem (ES) cells, plays a crucial role in the differentiation potential, particularly along the neural lineage, regulating gene induction and H3 'Lys-4' methylation at key developmental loci, including that mediated by retinoic acid. Does not affect ES cell self-renewal. Component or associated component of some histone methyltransferase complexes which regulates transcription through recruitment of those complexes to gene promoters. As part of the MLL1/MLL complex, involved in mono-, di- and trimethylation at 'Lys-4' of histone H3. Histone H3 'Lys-4' methylation represents a specific tag for epigenetic transcriptional activation. In association with ASH2L and WDR5, stimulates the histone methyltransferase activities of KMT2A, KMT2B, KMT2C, KMT2D, SETD1A and SETD1B. The chain is Retinoblastoma-binding protein 5 (RBBP5) from Homo sapiens (Human).